The primary structure comprises 497 residues: Probable cytosol aminopeptidase (497 aa).

Lys-267 and Asp-272 together coordinate Mn(2+). Lys-279 is a catalytic residue. Mn(2+) is bound by residues Asp-290, Asp-349, and Glu-351. The active site involves Arg-353.

It belongs to the peptidase M17 family. Requires Mn(2+) as cofactor.

It is found in the cytoplasm. It catalyses the reaction Release of an N-terminal amino acid, Xaa-|-Yaa-, in which Xaa is preferably Leu, but may be other amino acids including Pro although not Arg or Lys, and Yaa may be Pro. Amino acid amides and methyl esters are also readily hydrolyzed, but rates on arylamides are exceedingly low.. The enzyme catalyses Release of an N-terminal amino acid, preferentially leucine, but not glutamic or aspartic acids.. Functionally, presumably involved in the processing and regular turnover of intracellular proteins. Catalyzes the removal of unsubstituted N-terminal amino acids from various peptides. This is Probable cytosol aminopeptidase from Pseudomonas putida (strain ATCC 47054 / DSM 6125 / CFBP 8728 / NCIMB 11950 / KT2440).